Reading from the N-terminus, the 249-residue chain is ATP synthase subunit a (249 aa).

6 consecutive transmembrane segments (helical) span residues Gln30–Met50, Phe86–Leu106, His115–Ile135, Phe146–Ser166, Val191–Ile211, and Ile218–Leu238.

It belongs to the ATPase A chain family. As to quaternary structure, F-type ATPases have 2 components, CF(1) - the catalytic core - and CF(0) - the membrane proton channel. CF(1) has five subunits: alpha(3), beta(3), gamma(1), delta(1), epsilon(1). CF(0) has three main subunits: a(1), b(2) and c(9-12). The alpha and beta chains form an alternating ring which encloses part of the gamma chain. CF(1) is attached to CF(0) by a central stalk formed by the gamma and epsilon chains, while a peripheral stalk is formed by the delta and b chains.

The protein resides in the cell inner membrane. Its function is as follows. Key component of the proton channel; it plays a direct role in the translocation of protons across the membrane. The sequence is that of ATP synthase subunit a from Gluconobacter oxydans (strain 621H) (Gluconobacter suboxydans).